We begin with the raw amino-acid sequence, 139 residues long: Lymphocyte antigen 6H (139 aa).

The signal sequence occupies residues 1 to 25; it reads MLPAAMKSLGLALLALLLCPSPAHG. In terms of domain architecture, UPAR/Ly6 spans 26–113; that stretch reads LWCQDCTLAN…CEKDLCNGAS (88 aa). Disulfide bonds link Cys-28-Cys-51, Cys-31-Cys-39, Cys-44-Cys-72, Cys-76-Cys-103, and Cys-104-Cys-109. N-linked (GlcNAc...) asparagine glycosylation occurs at Asn-35. Asn-110 carries the GPI-anchor amidated asparagine lipid modification. Residues 111 to 139 constitute a propeptide, removed in mature form; sequence GASVAGRSPWALAGGLLLSLGPALLWAGP.

Interacts with CHRNA4 and CHRNA7. Strongly expressed in brain, also found in lower levels in eye and reproductive tissues.

The protein localises to the cell membrane. In terms of biological role, believed to act as modulator of nicotinic acetylcholine receptors (nAChRs) activity. In vitro inhibits alpha-3:beta-4-containing nAChRs maximum response. In vitro inhibits alpha-3:beta-4-containing nAChRs maximum response. May play a role in the intracellular trafficking of alpha-7-containing nAChRs and may inhibit their expression at the cell surface. Seems to inhibit alpha-7/CHRNA7 signaling in hippocampal neurons. The polypeptide is Lymphocyte antigen 6H (Ly6h) (Mus musculus (Mouse)).